The sequence spans 914 residues: UPF0182 protein PTH_1387 (914 aa).

Helical transmembrane passes span 7–27 (FAAYVLAGFGLIFLALTIAGA), 48–68 (IIISDLGLRLAVGLTFFVLLF), 109–129 (LLLLAFIALSALMAFLFNFTV), 173–193 (INWVILVSAFWVLAAYFVVYF), 209–229 (YHFSFLAAIFFGLKAAGYQLE), 252–272 (TLLAYKVLTYIALLCALAILI), and 281–301 (LVIYSIGVLLIASVLLGGIYP).

It belongs to the UPF0182 family.

The protein resides in the cell membrane. This Pelotomaculum thermopropionicum (strain DSM 13744 / JCM 10971 / SI) protein is UPF0182 protein PTH_1387.